We begin with the raw amino-acid sequence, 56 residues long: Large ribosomal subunit protein bL32 (56 aa).

It belongs to the bacterial ribosomal protein bL32 family.

The sequence is that of Large ribosomal subunit protein bL32 from Edwardsiella ictaluri (strain 93-146).